Here is a 693-residue protein sequence, read N- to C-terminus: Serine/threonine-protein kinase Pkn1 (693 aa).

Residues 59–328 (FRLVRRLGRG…QVALAEHVRV (270 aa)) enclose the Protein kinase domain. Residues 65–73 (LGRGGMGAV) and K88 contribute to the ATP site. D180 functions as the Proton acceptor in the catalytic mechanism. The PilZ domain maps to 393–491 (LVEVPVQVVL…LKAAVDALLQ (99 aa)). One copy of the TPR repeat lies at 630–663 (ARSHFQSGGALERDGQLSQALDQYERGLKLAPLE).

Belongs to the protein kinase superfamily. Ser/Thr protein kinase family. Post-translationally, autophosphorylated.

It catalyses the reaction L-seryl-[protein] + ATP = O-phospho-L-seryl-[protein] + ADP + H(+). It carries out the reaction L-threonyl-[protein] + ATP = O-phospho-L-threonyl-[protein] + ADP + H(+). With respect to regulation, may be regulated by calcium or a calmodulin-like protein. In terms of biological role, plays an essential role in proper timing of early development events. In Myxococcus xanthus, this protein is Serine/threonine-protein kinase Pkn1 (pkn1).